The primary structure comprises 208 residues: MVRGNDMLPNGHFHKKWQFHVKTWFNQPARKQRRRNARAEKAKATFPRPVAGSLKPIVRCQTVKYNTKQRLGRGFTLEELKEAGIPAKFAPTVGIAVDHRRKNRSLETLQANVQRLKTYRASLVIFPRNMKKPKAFEASAADCSAASQAKGELLPLKGTKPALELVKITADMKEGSQYGKLRIERVNARLKGMREKRAADEAAKKDDK.

It belongs to the eukaryotic ribosomal protein eL13 family.

In Chlamydomonas sp. (strain W80), this protein is Large ribosomal subunit protein eL13 (RPL13).